The primary structure comprises 153 residues: Peptidoglycan-associated lipoprotein (153 aa).

The N-terminal stretch at 1-19 (MNKFVKSLLVAGSVAALAA) is a signal peptide. Cysteine 20 carries N-palmitoyl cysteine lipidation. Cysteine 20 is lipidated: S-diacylglycerol cysteine. Residues 40 to 153 (SVADLQQRYN…SKNRRAVLAY (114 aa)) enclose the OmpA-like domain. Peptidoglycan binding stretches follow at residues 55-56 (FD) and 97-101 (YNIAL).

The protein belongs to the Pal lipoprotein family. In terms of assembly, the Tol-Pal system is composed of five core proteins: the inner membrane proteins TolA, TolQ and TolR, the periplasmic protein TolB and the outer membrane protein Pal. They form a network linking the inner and outer membranes and the peptidoglycan layer.

It localises to the cell outer membrane. In terms of biological role, part of the Tol-Pal system, which plays a role in outer membrane invagination during cell division and is important for maintaining outer membrane integrity. This is Peptidoglycan-associated lipoprotein from Haemophilus influenzae (strain ATCC 51907 / DSM 11121 / KW20 / Rd).